The following is a 68-amino-acid chain: Large ribosomal subunit protein uL29 (68 aa).

The protein belongs to the universal ribosomal protein uL29 family.

The polypeptide is Large ribosomal subunit protein uL29 (Streptococcus suis (strain 98HAH33)).